The chain runs to 1488 residues: Chromosome partition protein MukB (1488 aa).

Position 34–41 (34–41 (GGNGAGKS)) interacts with ATP. Coiled coils occupy residues 326 to 418 (LEAD…QYNQ), 444 to 472 (LDTFQAKEQEATEKLLSLEQKMSVAQTAH), and 509 to 602 (RHLA…QRAP). Residues 666 to 783 (PGGAEDQRLN…SLPIFGRAAR (118 aa)) are flexible hinge. Coiled-coil stretches lie at residues 835 to 923 (EAEI…AKLE), 977 to 1116 (EMLS…AKAG), and 1209 to 1265 (VEAI…LQSV). Positions 1049-1074 (ADSGAEERARQRRDELHAQLSNNRSR) are disordered. Positions 1051–1065 (SGAEERARQRRDELH) are enriched in basic and acidic residues.

The protein belongs to the SMC family. MukB subfamily. As to quaternary structure, homodimerization via its hinge domain. Binds to DNA via its C-terminal region. Interacts, and probably forms a ternary complex, with MukE and MukF via its C-terminal region. The complex formation is stimulated by calcium or magnesium. Interacts with tubulin-related protein FtsZ.

It localises to the cytoplasm. The protein localises to the nucleoid. Plays a central role in chromosome condensation, segregation and cell cycle progression. Functions as a homodimer, which is essential for chromosome partition. Involved in negative DNA supercoiling in vivo, and by this means organize and compact chromosomes. May achieve or facilitate chromosome segregation by condensation DNA from both sides of a centrally located replisome during cell division. This Salmonella paratyphi A (strain ATCC 9150 / SARB42) protein is Chromosome partition protein MukB.